The chain runs to 58 residues: Cyclotide trypsin inhibitor TopI1 (58 aa).

Positions 1–23 (MKFIIVLLLLTALTLTSIPVIEG) are cleaved as a signal peptide. A cross-link (cyclopeptide (Ile-Lys)) is located at residues 24–55 (ILKRCKTYDDCKDVCKARKGKCEFGICKCMIK). Disulfide bonds link C28–C45, C34–C50, and C38–C52. S56 is subject to Serine amide.

This is a cyclic peptide. In terms of tissue distribution, expressed by the venom gland.

It is found in the secreted. Functionally, first cyclic scorpion trypsin inhibitor (Kd~0.5 nM). Does not inhibit chymotrypsin. The sequence is that of Cyclotide trypsin inhibitor TopI1 from Tityus obscurus (Amazonian scorpion).